A 571-amino-acid polypeptide reads, in one-letter code: L-erythrulose 1-kinase (571 aa).

Residues S7–Y331 enclose the DhaK domain. The Tele-hemiaminal-histidine intermediate role is filled by H217. A DhaL domain is found at R367–E567. Residues D396–G402, T442–S443, G484, R539, and D552–G554 each bind ATP.

It catalyses the reaction L-erythrulose + ATP = L-erythrulose 1-phosphate + ADP + H(+). Its pathway is carbohydrate metabolism; L-threitol degradation. Functionally, kinase that has a preference for L-erythrulose, producing L-erythrulose-1P. Involved in the degradation pathway of L-threitol, that allows M.smegmatis to grow on this compound as the sole carbon source. Is also able to phosphorylate D-erythrulose and dihydroxyacetone in vitro. This is L-erythrulose 1-kinase from Mycolicibacterium smegmatis (strain ATCC 700084 / mc(2)155) (Mycobacterium smegmatis).